Consider the following 556-residue polypeptide: MKTDIQIAQEATMLPIKDVAASIGIEEDDLELYGKYKAKISDELINRTKKNPDGKLILVTAINPTPAGEGKTTTSVGLGEAFGRLGKKALIALREPSLGPCFGIKGGAAGGGYAQVVPMEDLNLHFTGDFHAITSANNLLAALLDNHIQQGNELGIDPRQIVWKRCMDMNDRVLRNIVVGLGSKMDGMVREDHFVITVASEIMAILCLADDMADLKKRLGRIIVAYTFDGKPVTADDLQATGSMAALLKDALKPNLIQTLEHTPAIVHGGPFANIAHGCNSVRATKTALKLADYVITEAGFGADLGAEKFFDIKCRMAGLKPDAVVLVATIRALKYNGGVPKDELSSENLDALKAGIVNLEKHIENLHKFGVPVVVTLNSFVTDTKAETDFVEQFCKERGCEFALSEVWEKGGEGGIDLANKVLETIEHKESNFKVLYDDSLSLKEKIETVAKEIYGADGVTYSPAAERELKRITDLGMGDFPVCMAKTQYSLSDDAKKLGRPSGFKINVREVYASAGAGFVVAVNGSIMTMPGLSKKPAAYGIDVDDNGVITGLF.

65–72 (TPAGEGKT) is an ATP binding site.

Belongs to the formate--tetrahydrofolate ligase family.

It carries out the reaction (6S)-5,6,7,8-tetrahydrofolate + formate + ATP = (6R)-10-formyltetrahydrofolate + ADP + phosphate. It participates in one-carbon metabolism; tetrahydrofolate interconversion. The polypeptide is Formate--tetrahydrofolate ligase (Agathobacter rectalis (strain ATCC 33656 / DSM 3377 / JCM 17463 / KCTC 5835 / VPI 0990) (Eubacterium rectale)).